The sequence spans 202 residues: S-modulin (202 aa).

A lipid anchor (N-myristoyl glycine) is attached at G2. 4 EF-hand domains span residues Q25 to A60, D61 to G96, K97 to M132, and T147 to I182. Ca(2+)-binding residues include D74, N76, D78, T80, E85, D110, D112, N114, T116, and E121.

This sequence belongs to the recoverin family. Post-translationally, the N-terminus is blocked.

Its function is as follows. Calcium-dependent regulator of light sensitivity of cGMP phosphodiesterase in rod outer segments. Controls rhodopsin phosphorylation in a Ca(2+)-dependent manner. This Aquarana catesbeiana (American bullfrog) protein is S-modulin.